Consider the following 338-residue polypeptide: UDP-3-O-acylglucosamine N-acyltransferase (338 aa).

His-251 (proton acceptor) is an active-site residue.

It belongs to the transferase hexapeptide repeat family. LpxD subfamily. As to quaternary structure, homotrimer.

The enzyme catalyses a UDP-3-O-[(3R)-3-hydroxyacyl]-alpha-D-glucosamine + a (3R)-hydroxyacyl-[ACP] = a UDP-2-N,3-O-bis[(3R)-3-hydroxyacyl]-alpha-D-glucosamine + holo-[ACP] + H(+). The protein operates within bacterial outer membrane biogenesis; LPS lipid A biosynthesis. Its function is as follows. Catalyzes the N-acylation of UDP-3-O-acylglucosamine using 3-hydroxyacyl-ACP as the acyl donor. Is involved in the biosynthesis of lipid A, a phosphorylated glycolipid that anchors the lipopolysaccharide to the outer membrane of the cell. In Psychrobacter cryohalolentis (strain ATCC BAA-1226 / DSM 17306 / VKM B-2378 / K5), this protein is UDP-3-O-acylglucosamine N-acyltransferase.